The sequence spans 263 residues: 3-methyl-2-oxobutanoate hydroxymethyltransferase (263 aa).

The Mg(2+) site is built by Asp43 and Asp82. 3-methyl-2-oxobutanoate contacts are provided by residues 43 to 44 (DS), Asp82, and Lys111. Glu113 serves as a coordination point for Mg(2+). The Proton acceptor role is filled by Glu179.

The protein belongs to the PanB family. Homodecamer; pentamer of dimers. Requires Mg(2+) as cofactor.

It localises to the cytoplasm. The catalysed reaction is 3-methyl-2-oxobutanoate + (6R)-5,10-methylene-5,6,7,8-tetrahydrofolate + H2O = 2-dehydropantoate + (6S)-5,6,7,8-tetrahydrofolate. It participates in cofactor biosynthesis; (R)-pantothenate biosynthesis; (R)-pantoate from 3-methyl-2-oxobutanoate: step 1/2. In terms of biological role, catalyzes the reversible reaction in which hydroxymethyl group from 5,10-methylenetetrahydrofolate is transferred onto alpha-ketoisovalerate to form ketopantoate. This is 3-methyl-2-oxobutanoate hydroxymethyltransferase from Neisseria meningitidis serogroup A / serotype 4A (strain DSM 15465 / Z2491).